We begin with the raw amino-acid sequence, 174 residues long: Ribosome rescue factor SmrB (174 aa).

The Smr domain maps to 96-171; that stretch reads LDLHGMNQQQ…GDSAILVLLD (76 aa).

This sequence belongs to the SmrB family. In terms of assembly, associates with collided ribosomes, but not with correctly translating polysomes.

In terms of biological role, acts as a ribosome collision sensor. Detects stalled/collided disomes (pairs of ribosomes where the leading ribosome is stalled and a second ribosome has collided with it) and endonucleolytically cleaves mRNA at the 5' boundary of the stalled ribosome. Stalled/collided disomes form a new interface (primarily via the 30S subunits) that binds SmrB. Cleaved mRNA becomes available for tmRNA ligation, leading to ribosomal subunit dissociation and rescue of stalled ribosomes. In Aeromonas hydrophila subsp. hydrophila (strain ATCC 7966 / DSM 30187 / BCRC 13018 / CCUG 14551 / JCM 1027 / KCTC 2358 / NCIMB 9240 / NCTC 8049), this protein is Ribosome rescue factor SmrB.